Here is a 351-residue protein sequence, read N- to C-terminus: Glycerol-1-phosphate dehydrogenase [NAD(P)+] (351 aa).

NAD(+) contacts are provided by residues 97–101 (GKTID) and 119–122 (TAPS). A substrate-binding site is contributed by D124. An NAD(+)-binding site is contributed by S128. D171 lines the substrate pocket. 2 residues coordinate Zn(2+): D171 and H251. H255 contributes to the substrate binding site. H267 contributes to the Zn(2+) binding site.

This sequence belongs to the glycerol-1-phosphate dehydrogenase family. As to quaternary structure, homodimer. Zn(2+) serves as cofactor.

It localises to the cytoplasm. It catalyses the reaction sn-glycerol 1-phosphate + NAD(+) = dihydroxyacetone phosphate + NADH + H(+). The enzyme catalyses sn-glycerol 1-phosphate + NADP(+) = dihydroxyacetone phosphate + NADPH + H(+). Its pathway is membrane lipid metabolism; glycerophospholipid metabolism. Catalyzes the NAD(P)H-dependent reduction of dihydroxyacetonephosphate (DHAP or glycerone phosphate) to glycerol 1-phosphate (G1P). The G1P thus generated is used as the glycerophosphate backbone of phospholipids in the cellular membranes of Archaea. This Metallosphaera sedula (strain ATCC 51363 / DSM 5348 / JCM 9185 / NBRC 15509 / TH2) protein is Glycerol-1-phosphate dehydrogenase [NAD(P)+].